A 228-amino-acid polypeptide reads, in one-letter code: Ribosomal RNA small subunit methyltransferase G (228 aa).

S-adenosyl-L-methionine is bound by residues G89, L94, 140-141 (VE), and R159.

Belongs to the methyltransferase superfamily. RNA methyltransferase RsmG family.

It is found in the cytoplasm. It catalyses the reaction guanosine(527) in 16S rRNA + S-adenosyl-L-methionine = N(7)-methylguanosine(527) in 16S rRNA + S-adenosyl-L-homocysteine. Specifically methylates the N7 position of guanine in position 527 of 16S rRNA. This chain is Ribosomal RNA small subunit methyltransferase G, found in Burkholderia vietnamiensis (strain G4 / LMG 22486) (Burkholderia cepacia (strain R1808)).